The following is a 550-amino-acid chain: Putative pentatricopeptide repeat-containing protein At5g37570 (550 aa).

PPR repeat units follow at residues 73–107, 109–143, 144–174, 175–205, 206–240, 241–267, 268–302, 303–333, 339–369, 370–404, 405–435, and 441–475; these read GTYL…GLAR, DEYT…GFDK, DVVV…MPER, NAVS…MPER, NLGS…DIIS, YTSM…ARGV, DVRA…NVKP, DEFI…LHQR, SHYV…MPQR, DLVS…GIVP, DEVA…MRKK, and SPDH…AHAS. The type E motif stretch occupies residues 476 to 550; the sequence is AWGSLLGGCS…KICGRSWISR (75 aa).

It belongs to the PPR family. PCMP-E subfamily.

The chain is Putative pentatricopeptide repeat-containing protein At5g37570 (PCMP-E37) from Arabidopsis thaliana (Mouse-ear cress).